The following is a 273-amino-acid chain: Nucleotide-binding protein TTHA0319 (273 aa).

8–15 is an ATP binding site; that stretch reads GLSGAGKT. Residue 57–60 participates in GTP binding; the sequence is DARA.

It belongs to the RapZ-like family.

Its function is as follows. Displays ATPase and GTPase activities. In Thermus thermophilus (strain ATCC 27634 / DSM 579 / HB8), this protein is Nucleotide-binding protein TTHA0319.